The following is a 281-amino-acid chain: Pseudouridine-5'-phosphate glycosidase (281 aa).

Glu-9 acts as the Proton donor in catalysis. Residues Lys-69 and Val-89 each coordinate substrate. Mn(2+) is bound at residue Asp-118. 120 to 122 (SAD) serves as a coordination point for substrate. Lys-139 functions as the Nucleophile in the catalytic mechanism.

This sequence belongs to the pseudouridine-5'-phosphate glycosidase family. In terms of assembly, homotrimer. Mn(2+) is required as a cofactor.

It catalyses the reaction D-ribose 5-phosphate + uracil = psi-UMP + H2O. Its function is as follows. Catalyzes the reversible cleavage of pseudouridine 5'-phosphate (PsiMP) to ribose 5-phosphate and uracil. Functions biologically in the cleavage direction, as part of a pseudouridine degradation pathway. This is Pseudouridine-5'-phosphate glycosidase from Thermus thermophilus (strain ATCC BAA-163 / DSM 7039 / HB27).